The primary structure comprises 456 residues: Adenylosuccinate synthetase isozyme 2 (456 aa).

Residues 1 to 14 (MSISESSPAATSLP) are compositionally biased toward polar residues. The interval 1–24 (MSISESSPAATSLPNGDCGRPRAR) is disordered. Residues 39 to 45 (GDEGKGK) and 67 to 69 (GHT) contribute to the GTP site. Catalysis depends on Asp-40, which acts as the Proton acceptor. 2 residues coordinate Mg(2+): Asp-40 and Gly-67. Position 40 (Asp-40) interacts with substrate. Residues 40–43 (DEGK), 65–68 (NAGH), Thr-162, Arg-176, Asn-255, Thr-270, and Arg-334 each bind IMP. His-68 (proton donor) is an active-site residue. 330–336 (VTTGRKR) provides a ligand contact to substrate. Residues Arg-336, 362–364 (KLD), and 444–447 (GVGK) each bind GTP.

The protein belongs to the adenylosuccinate synthetase family. As to quaternary structure, homodimer. It depends on Mg(2+) as a cofactor.

The protein resides in the cytoplasm. Its subcellular location is the mitochondrion. It carries out the reaction IMP + L-aspartate + GTP = N(6)-(1,2-dicarboxyethyl)-AMP + GDP + phosphate + 2 H(+). Its pathway is purine metabolism; AMP biosynthesis via de novo pathway; AMP from IMP: step 1/2. Inhibited competitively by AMP and IMP and non-competitively by fructose 1,6-bisphosphate. In terms of biological role, plays an important role in the de novo pathway and in the salvage pathway of purine nucleotide biosynthesis. Catalyzes the first committed step in the biosynthesis of AMP from IMP. The polypeptide is Adenylosuccinate synthetase isozyme 2 (Adss2) (Mus musculus (Mouse)).